The following is a 124-amino-acid chain: Fluoride-specific ion channel FluC (124 aa).

A run of 4 helical transmembrane segments spans residues 5-25, 38-58, 69-89, and 97-117; these read ILAV…AGTW, TLAV…WFLL, GLIV…LDTL, and ALIA…ATWA. Residues glycine 76 and threonine 79 each coordinate Na(+).

The protein belongs to the fluoride channel Fluc/FEX (TC 1.A.43) family.

It localises to the cell inner membrane. The catalysed reaction is fluoride(in) = fluoride(out). Na(+) is not transported, but it plays an essential structural role and its presence is essential for fluoride channel function. Fluoride-specific ion channel. Important for reducing fluoride concentration in the cell, thus reducing its toxicity. The sequence is that of Fluoride-specific ion channel FluC from Pseudomonas fluorescens (strain SBW25).